The sequence spans 250 residues: Sulfate transporter CysZ (250 aa).

The next 4 helical transmembrane spans lie at 27–47, 64–84, 150–170, and 210–230; these read FVVL…YYLF, FLSW…LATF, FLLL…WFLF, and MLVA…PVAV.

It belongs to the CysZ family.

The protein resides in the cell inner membrane. Functionally, high affinity, high specificity proton-dependent sulfate transporter, which mediates sulfate uptake. Provides the sulfur source for the cysteine synthesis pathway. The sequence is that of Sulfate transporter CysZ from Vibrio cholerae serotype O1 (strain ATCC 39541 / Classical Ogawa 395 / O395).